We begin with the raw amino-acid sequence, 507 residues long: MDEFQRNSNKHRSWQQFFLYPLFFREDLYAIAHDHHLHRSGSSEPTEILVSNFVSFLTVKRSIRRIRKQNNSISLFGNSDSNKFIEYNKNFSFKSILEGFTIVLEVSFAMRSKHFIKGMDGWNSLRSIHCIFPFMEDKLPHSNYISDIRVPYSIHPEILVRIFRRWILDAPSLHLLRLILHECSFSRENLQKAMITQRENTRFSLFLWNSYVYECESFLIPLIKRFFNSQSLLYGSFPDRTHFEKKIKDIVLFPLQKISTKKIWLLKDSFIHYVRYGERSLIALKGTHLQVKKCRYHLFHFLQYYFHLWFQPYRICSLELSKTSFSFLGFFMHVKMRPLVVRAKMLDDLFITDLITNELNSTAPLKSILFSLAKEKFCDISGWPISKLSWTSLSDDDILDRFDRIWINLFHYYSGSINQDGLYHIKYILLISCAKTLACKHKSTIRVVREQLGSELFTKSFSKERESISSSFSKTRSQRERIWNSEISQITPLASFWQKMENKQIEN.

The protein belongs to the intron maturase 2 family. MatK subfamily.

The protein resides in the plastid. It localises to the chloroplast. Usually encoded in the trnK tRNA gene intron. Probably assists in splicing its own and other chloroplast group II introns. The protein is Maturase K of Calocedrus decurrens (California incense-cedar).